Reading from the N-terminus, the 659-residue chain is RNA polymerase II subunit A C-terminal domain phosphatase (659 aa).

Residues 139 to 303 (ITNRKLVLLV…KNSKEQMPVQ (165 aa)) enclose the FCP1 homology domain. The BRCT domain maps to 351 to 443 (ERHKVLDGCV…LKADENLFQL (93 aa)). Residues 484-504 (ALSDDEDDGDNEDEDDDGNDV) are compositionally biased toward acidic residues. The segment at 484–640 (ALSDDEDDGD…PESDDDDEFE (157 aa)) is disordered. A compositionally biased stretch (basic and acidic residues) spans 505 to 519 (GEDKGDENLEEKQEK). The span at 529-538 (QNGSVENQSG) shows a compositional bias: polar residues. Acidic residues-rich tracts occupy residues 560–576 (MEDE…DDDT), 596–607 (ENEDDAVFDVDD), and 616–640 (IDEE…DEFE).

It is found in the nucleus. The enzyme catalyses O-phospho-L-seryl-[protein] + H2O = L-seryl-[protein] + phosphate. It carries out the reaction O-phospho-L-threonyl-[protein] + H2O = L-threonyl-[protein] + phosphate. In terms of biological role, during the late stages of oogenesis, dephosphorylates 'Ser-5' of the heptad repeats YSPTSPS in the C-terminal domain of the largest RNA polymerase II subunit ama-1. Similarly, dephosphorylates 'Ser-5' of ama-1 in early embryonic cells prior to the activation of the zygotic transcription program at the 4-cell embryonic stage. May dephosphorylate 'Ser-2' of the ama-1 heptad repeats YSPTSPS in embryonic somatic and germline cells. The polypeptide is RNA polymerase II subunit A C-terminal domain phosphatase (Caenorhabditis elegans).